The sequence spans 492 residues: Target of Myb1 membrane trafficking protein (492 aa).

Met-1 bears the N-acetylmethionine mark. Position 11 is a phosphoserine (Ser-11). The region spanning 20–152 (ATDGSLQSED…DLRRKGLEFP (133 aa)) is the VHS domain. The short motif at 48 to 56 (KDAFRAVKK) is the KRKK element. Residue Ser-160 is modified to Phosphoserine. Thr-164 carries the post-translational modification Phosphothreonine. The span at 167-195 (RTVFNSETPSRQNSVSSNTSQRGDLSQHA) shows a compositional bias: polar residues. The interval 167–215 (RTVFNSETPSRQNSVSSNTSQRGDLSQHATPLPTPAVLPGDSPITPTPE) is disordered. A phosphoserine mark is found at Ser-176, Ser-180, and Ser-208. The region spanning 215 to 303 (EQIGKLRSEL…VFLRHERFER (89 aa)) is the GAT domain. The segment at 321–326 (DLIDMG) is clathrin box. Ser-355 and Ser-376 each carry phosphoserine. Lys-385 participates in a covalent cross-link: Glycyl lysine isopeptide (Lys-Gly) (interchain with G-Cter in SUMO2). Residues 392 to 463 (TDGLAGALDA…ADRLPNLASP (72 aa)) form an interaction with MYO6 region. Residues 450 to 492 (RAKAADRLPNLASPSAEGPPRPSPGTAPRRKTQEKDDDMLFAL) are disordered. Phosphoserine is present on Ser-462.

This sequence belongs to the TOM1 family. In terms of assembly, found in a complex with TOLLIP; interacts (via GAT domain) with TOLLIP (via N-terminus); the interactions leads to TOM1-recruitment to endosomes and inhibition of TOLLIP binding to PtdIns(3)P. Interacts (via GAT domain and the C-terminal part of the VHS domain) with UBC/ubiquitin. Interacts (via clathrin box and C-terminus) with clathrin heavy chain. Interacts with MYO6. Interacts with TAX1BP1; CALCOCO2/NDP52 and OPTN; the interaction is indirect and is mediated by MYO6, which acts as a bridge between TOM1 and the three autophagy receptors. Interacts (via C-terminus) with ZFYVE16 (via C-terminus); interaction is required to target TOM1 and clathrin to endosomes. Interacts with LRBA. Post-translationally, monoubiquitinated. Ubiquitous. In adult brain, it is highly expressed at the mesencephalic level, in the hippocampal formation and medial lemniscus. In cerebellum, it is highly expressed in Purkinje cells and granular layers.

Its subcellular location is the cytoplasm. The protein resides in the endosome membrane. It localises to the early endosome membrane. Its function is as follows. Adapter protein that plays a role in the intracellular membrane trafficking of ubiquitinated proteins, thereby participating in autophagy, ubiquitination-dependent signaling and receptor recycling pathways. Acts as a MYO6/Myosin VI adapter protein that targets MYO6 to endocytic structures. Together with MYO6, required for autophagosomal delivery of endocytic cargo, the maturation of autophagosomes and their fusion with lysosomes. MYO6 links TOM1 with autophagy receptors, such as TAX1BP1; CALCOCO2/NDP52 and OPTN. Binds to polyubiquitinated proteins via its GAT domain. In a complex with TOLLIP, recruits ubiquitin-conjugated proteins onto early endosomes. The Tom1-Tollip complex may regulate endosomal trafficking by linking polyubiquitinated proteins to clathrin. Mediates clathrin recruitment to early endosomes by ZFYVE16. Modulates binding of TOLLIP to phosphatidylinositol 3-phosphate (PtdIns(3)P) via binding competition; the association with TOLLIP may favor the release of TOLLIP from endosomal membranes, allowing TOLLIP to commit to cargo trafficking. Acts as a phosphatidylinositol 5-phosphate (PtdIns(5)P) effector by binding to PtdIns(5)P, thereby regulating endosomal maturation. PtdIns(5)P-dependent recruitment to signaling endosomes may block endosomal maturation. Also inhibits Toll-like receptor (TLR) signaling and participates in immune receptor recycling. The chain is Target of Myb1 membrane trafficking protein from Mus musculus (Mouse).